The chain runs to 677 residues: Amine oxidase [copper-containing] alpha 2, peroxisomal (677 aa).

A substrate-binding site is contributed by Tyr-320–Thr-331. Catalysis depends on Asp-322, which acts as the Proton acceptor. Cysteines 341 and 367 form a disulfide. Val-407–Tyr-412 is a substrate binding site. The active-site Schiff-base intermediate with substrate; via topaquinone is Tyr-410. Tyr-410 carries the 2',4',5'-topaquinone modification. Residues His-466 and His-468 each coordinate Cu cation. Asp-477, Asp-617, and Ile-618 together coordinate Mn(2+). His-628 is a Cu cation binding site.

Belongs to the copper/topaquinone oxidase family. As to quaternary structure, homodimer. It depends on Cu cation as a cofactor. The cofactor is Zn(2+). L-topaquinone is required as a cofactor. Topaquinone (TPQ) is generated by copper-dependent autoxidation of a specific tyrosyl residue. As to expression, expressed exclusively in leaves.

Its subcellular location is the peroxisome. It catalyses the reaction a primary methyl amine + O2 + H2O = an aldehyde + H2O2 + NH4(+). The protein operates within amine and polyamine degradation; putrescine degradation. Functionally, copper amine oxidase that can use putrescine and spermidine as substrates. Involved in putrescine catabolism in peroxisomes in response to salt stress. Regulates arginine-dependent nitric oxide (NO) production, a key signaling molecule regulating a wide range of physiological processes including responses to salt stress, by influencing arginine bioavailability. Modulates primary root growth. This is Amine oxidase [copper-containing] alpha 2, peroxisomal from Arabidopsis thaliana (Mouse-ear cress).